Reading from the N-terminus, the 94-residue chain is CRISPR-associated endoribonuclease Cas2 (94 aa).

A Mg(2+)-binding site is contributed by Asp-10.

The protein belongs to the CRISPR-associated endoribonuclease Cas2 protein family. Homodimer, forms a heterotetramer with a Cas1 homodimer. It depends on Mg(2+) as a cofactor.

Its function is as follows. CRISPR (clustered regularly interspaced short palindromic repeat), is an adaptive immune system that provides protection against mobile genetic elements (viruses, transposable elements and conjugative plasmids). CRISPR clusters contain sequences complementary to antecedent mobile elements and target invading nucleic acids. CRISPR clusters are transcribed and processed into CRISPR RNA (crRNA). Functions as a ssRNA-specific endoribonuclease. Involved in the integration of spacer DNA into the CRISPR cassette. The sequence is that of CRISPR-associated endoribonuclease Cas2 from Leptospira interrogans serogroup Icterohaemorrhagiae serovar Lai (strain 56601).